Consider the following 624-residue polypeptide: DNA mismatch repair protein MutL (624 aa).

This sequence belongs to the DNA mismatch repair MutL/HexB family.

This protein is involved in the repair of mismatches in DNA. It is required for dam-dependent methyl-directed DNA mismatch repair. May act as a 'molecular matchmaker', a protein that promotes the formation of a stable complex between two or more DNA-binding proteins in an ATP-dependent manner without itself being part of a final effector complex. The polypeptide is DNA mismatch repair protein MutL (Xanthomonas campestris pv. campestris (strain B100)).